The primary structure comprises 422 residues: Probable protease eep (422 aa).

His18 provides a ligand contact to Zn(2+). The active site involves Glu19. His22 is a binding site for Zn(2+). The next 3 membrane-spanning stretches (helical) occupy residues 176 to 196 (FAGP…AVFL), 349 to 369 (VVFL…LPIP), and 394 to 414 (EGII…LVTW). In terms of domain architecture, PDZ spans 179–273 (PMNNFILGFI…EEQLTVTPEK (95 aa)).

It belongs to the peptidase M50B family. Requires Zn(2+) as cofactor.

Its subcellular location is the cell membrane. Functionally, involved in production of the peptide pheromone cAD1. In Enterococcus faecalis (strain ATCC 700802 / V583), this protein is Probable protease eep (eep).